We begin with the raw amino-acid sequence, 201 residues long: NADH-ubiquinone oxidoreductase 21.3 kDa subunit (201 aa).

In terms of assembly, complex I is composed of about 40 different subunits.

Its subcellular location is the mitochondrion inner membrane. It carries out the reaction a ubiquinone + NADH + 5 H(+)(in) = a ubiquinol + NAD(+) + 4 H(+)(out). Transfer of electrons from NADH to the respiratory chain. The immediate electron acceptor for the enzyme is believed to be ubiquinone. The chain is NADH-ubiquinone oxidoreductase 21.3 kDa subunit from Neurospora crassa (strain ATCC 24698 / 74-OR23-1A / CBS 708.71 / DSM 1257 / FGSC 987).